A 344-amino-acid chain; its full sequence is Tetraacyldisaccharide 4'-kinase (344 aa).

65 to 72 provides a ligand contact to ATP; sequence HAGGTGKT.

This sequence belongs to the LpxK family.

The catalysed reaction is a lipid A disaccharide + ATP = a lipid IVA + ADP + H(+). It participates in glycolipid biosynthesis; lipid IV(A) biosynthesis; lipid IV(A) from (3R)-3-hydroxytetradecanoyl-[acyl-carrier-protein] and UDP-N-acetyl-alpha-D-glucosamine: step 6/6. Its function is as follows. Transfers the gamma-phosphate of ATP to the 4'-position of a tetraacyldisaccharide 1-phosphate intermediate (termed DS-1-P) to form tetraacyldisaccharide 1,4'-bis-phosphate (lipid IVA). This Neisseria meningitidis serogroup B (strain ATCC BAA-335 / MC58) protein is Tetraacyldisaccharide 4'-kinase.